A 149-amino-acid polypeptide reads, in one-letter code: Major outer capsid protein (149 aa).

As to quaternary structure, homotrimer.

It localises to the virion. In terms of biological role, assembles to form an icosahedral capsid with a T=13 symmetry. Drives the penetration of the inner capsid (core) into the cytoplasm. The polypeptide is Major outer capsid protein (P8) (Pseudomonas phage phi6 (Bacteriophage phi-6)).